A 132-amino-acid polypeptide reads, in one-letter code: uncharacterized protein (132 aa).

Helical transmembrane passes span M18–I38, I50–I70, and V71–I91.

Its subcellular location is the cell membrane. This is an uncharacterized protein from Bacillus subtilis (strain 168).